Reading from the N-terminus, the 390-residue chain is 1-acyl-sn-glycerol-3-phosphate acyltransferase 2 (390 aa).

Residues 2-22 (AMAAAVIVPLGILFFISGLVV) traverse the membrane as a helical segment. The HXXXXD motif signature appears at 91 to 96 (HRSDID). 2 consecutive transmembrane segments (helical) span residues 305–325 (LAVV…FLHW) and 333–353 (KGIA…QILI). The disordered stretch occupies residues 358 to 390 (SERSTPAKVAPAKPKDNHQSGPSSQTEVEEKQK).

This sequence belongs to the 1-acyl-sn-glycerol-3-phosphate acyltransferase family.

The protein localises to the endoplasmic reticulum membrane. The enzyme catalyses a 1-acyl-sn-glycero-3-phosphate + an acyl-CoA = a 1,2-diacyl-sn-glycero-3-phosphate + CoA. It functions in the pathway phospholipid metabolism; CDP-diacylglycerol biosynthesis; CDP-diacylglycerol from sn-glycerol 3-phosphate: step 2/3. In terms of biological role, converts lysophosphatidic acid (LPA) into phosphatidic acid by incorporating acyl moiety at the 2 position. This Brassica napus (Rape) protein is 1-acyl-sn-glycerol-3-phosphate acyltransferase 2 (LPAT2).